Here is a 140-residue protein sequence, read N- to C-terminus: uncharacterized protein (140 aa).

This is an uncharacterized protein from Xylella fastidiosa (strain Temecula1 / ATCC 700964).